The chain runs to 475 residues: MSTQRLRNEDYHDYSSTDVSPEESPSEGLGSFSPGSYQRLGENSSMTWFQTLIHLLKGNIGTGLLGLPLAVKNAGLLLGPLSLLVIGIVAVHCMGILVKCAHHLCRRLNKPFLDYGDTVMYGLECSPSTWIRNHSHWGRRIVDFFLVVTQLGFCCVYFVFLADNFKQVIEAANGTTTNCNNNETVILTPTMDSRLYMLTFLPFLVLLSFIRNLRILSIFSLLANISMFVSLIMIYQFIVQRIPDPSHLPLVAPWKTYPLFFGTAIFAFEGIGVVLPLENKMKDSQKFPLILYLGMAIITVLYISLGSLGYLQFGADIKGSITLNLPNCWLYQSVKLLYSIGIFFTYALQFYVAAEIIIPAIVSRVPERFELVVDLSARTAMVCVTCVLAVLIPRLDLVISLVGSVSSSALALIIPPLLEVTTYYGEGISPLTITKDALISILGFVGFVVGTYESLWELIQPSHSDSSTNSTSAFI.

Basic and acidic residues predominate over residues 1–15; it reads MSTQRLRNEDYHDYS. Residues 1-32 form a disordered region; the sequence is MSTQRLRNEDYHDYSSTDVSPEESPSEGLGSF. Over 1–50 the chain is Cytoplasmic; that stretch reads MSTQRLRNEDYHDYSSTDVSPEESPSEGLGSFSPGSYQRLGENSSMTWFQ. The chain crosses the membrane as a helical span at residues 51 to 71; the sequence is TLIHLLKGNIGTGLLGLPLAV. Over 72 to 77 the chain is Extracellular; that stretch reads KNAGLL. The chain crosses the membrane as a helical span at residues 78 to 98; the sequence is LGPLSLLVIGIVAVHCMGILV. Over 99 to 140 the chain is Cytoplasmic; it reads KCAHHLCRRLNKPFLDYGDTVMYGLECSPSTWIRNHSHWGRR. The helical transmembrane segment at 141 to 161 threads the bilayer; the sequence is IVDFFLVVTQLGFCCVYFVFL. Residues 162–189 are Extracellular-facing; sequence ADNFKQVIEAANGTTTNCNNNETVILTP. N-linked (GlcNAc...) asparagine glycosylation is found at Asn-173 and Asn-182. A disulfide bridge connects residues Cys-179 and Cys-328. Residues 190-210 traverse the membrane as a helical segment; it reads TMDSRLYMLTFLPFLVLLSFI. Residues 211–214 are Cytoplasmic-facing; that stretch reads RNLR. A helical transmembrane segment spans residues 215-235; sequence ILSIFSLLANISMFVSLIMIY. Residues 236–256 are Extracellular-facing; sequence QFIVQRIPDPSHLPLVAPWKT. A helical membrane pass occupies residues 257-277; the sequence is YPLFFGTAIFAFEGIGVVLPL. The Cytoplasmic portion of the chain corresponds to 278-288; that stretch reads ENKMKDSQKFP. The helical transmembrane segment at 289–309 threads the bilayer; sequence LILYLGMAIITVLYISLGSLG. Topologically, residues 310-341 are extracellular; that stretch reads YLQFGADIKGSITLNLPNCWLYQSVKLLYSIG. Residues 342 to 362 form a helical membrane-spanning segment; it reads IFFTYALQFYVAAEIIIPAIV. Residues 363 to 371 lie on the Cytoplasmic side of the membrane; it reads SRVPERFEL. A helical transmembrane segment spans residues 372-392; the sequence is VVDLSARTAMVCVTCVLAVLI. At 393–396 the chain is on the extracellular side; the sequence is PRLD. Residues 397–417 traverse the membrane as a helical segment; it reads LVISLVGSVSSSALALIIPPL. The Cytoplasmic segment spans residues 418–438; sequence LEVTTYYGEGISPLTITKDAL. The helical transmembrane segment at 439–459 threads the bilayer; it reads ISILGFVGFVVGTYESLWELI. At 460–475 the chain is on the extracellular side; that stretch reads QPSHSDSSTNSTSAFI. An N-linked (GlcNAc...) asparagine glycan is attached at Asn-469.

The protein belongs to the amino acid/polyamine transporter 2 family. Widely expressed and predominantly expressed in brain. Within the brain, expression restricted to neurons and not detected in glial cells. Abundant in regions rich in neurons using glutamate and GABA such as Purkinje cells in the cerebellum and pyramidal cells in the hippocampus.

Its subcellular location is the cell membrane. It localises to the apical cell membrane. The protein resides in the lysosome membrane. It catalyses the reaction glycine(in) + H(+)(in) = glycine(out) + H(+)(out). The catalysed reaction is L-proline(out) + H(+)(out) = L-proline(in) + H(+)(in). The enzyme catalyses D-proline(out) + H(+)(out) = D-proline(in) + H(+)(in). It carries out the reaction L-alanine(in) + H(+)(in) = L-alanine(out) + H(+)(out). It catalyses the reaction D-alanine(in) + H(+)(in) = D-alanine(out) + H(+)(out). The catalysed reaction is L-serine(in) + H(+)(in) = L-serine(out) + H(+)(out). The enzyme catalyses D-serine(out) + H(+)(out) = D-serine(in) + H(+)(in). It carries out the reaction 4-aminobutanoate(in) + H(+)(in) = 4-aminobutanoate(out) + H(+)(out). It catalyses the reaction beta-alanine(in) + H(+)(in) = beta-alanine(out) + H(+)(out). Electrogenic proton/amino acid symporter with selectivity for small apolar L-amino acids, their D-enantiomers and selected amino acid derivatives such as 4-aminobutanoate/GABA. May be involved in the efflux from the lysosomal compartment of neutral amino acids resulting from proteolysis. May play a role in specifying sites for exocytosis in neurons. The protein is Proton-coupled amino acid transporter 1 of Rattus norvegicus (Rat).